The primary structure comprises 360 residues: Teichoic acids export ATP-binding protein TagH (360 aa).

Residues 24 to 245 (LKAMFFPKTR…YEDYINWFNK (222 aa)) enclose the ABC transporter domain. 59–66 (GINGSGKS) is an ATP binding site. The unknown stretch occupies residues 246 to 360 (LSKEEKEAHK…GDIDNSDVSL (115 aa)). Positions 270–290 (EEQENGKAGSGGDGTQPIVQP) are disordered.

This sequence belongs to the ABC transporter superfamily. Teichoic acids exporter (TC 3.A.1.104.1) family. As to quaternary structure, the complex is composed of two ATP-binding proteins (TagH) and two transmembrane proteins (TagG).

It is found in the cell membrane. The enzyme catalyses ATP + H2O + teichoic acidSide 1 = ADP + phosphate + teichoic acidSide 2.. Part of the ABC transporter complex TagGH involved in teichoic acids export. Responsible for energy coupling to the transport system. The chain is Teichoic acids export ATP-binding protein TagH from Shouchella clausii (strain KSM-K16) (Alkalihalobacillus clausii).